Reading from the N-terminus, the 271-residue chain is Shikimate dehydrogenase (NADP(+)) (271 aa).

Shikimate contacts are provided by residues 19–21 (SLS) and T65. The Proton acceptor role is filled by K69. E81 is a binding site for NADP(+). 2 residues coordinate shikimate: N90 and D105. NADP(+) is bound by residues 128-132 (GAGGA), 150-155 (NRTIEK), and I211. Y213 serves as a coordination point for shikimate. G234 is a binding site for NADP(+).

It belongs to the shikimate dehydrogenase family. Homodimer.

It catalyses the reaction shikimate + NADP(+) = 3-dehydroshikimate + NADPH + H(+). It participates in metabolic intermediate biosynthesis; chorismate biosynthesis; chorismate from D-erythrose 4-phosphate and phosphoenolpyruvate: step 4/7. Functionally, involved in the biosynthesis of the chorismate, which leads to the biosynthesis of aromatic amino acids. Catalyzes the reversible NADPH linked reduction of 3-dehydroshikimate (DHSA) to yield shikimate (SA). The chain is Shikimate dehydrogenase (NADP(+)) from Pyrococcus furiosus (strain ATCC 43587 / DSM 3638 / JCM 8422 / Vc1).